Reading from the N-terminus, the 1960-residue chain is Nuclear pore complex protein Nup98-Nup96 (1960 aa).

A run of 46 repeats spans residues 2–3 (FG), 9–10 (FG), 18–19 (FG), 30–31 (FG), 35–36 (FG), 43–44 (FG), 59–60 (FG), 73–74 (FG), 81–82 (FG), 92–93 (FG), 105–106 (FG), 117–118 (FG), 125–126 (FG), 135–136 (FG), 148–149 (FG), 160–161 (FG), 163–164 (FG), 174–175 (FG), 264–265 (FG), 266–267 (FG), 282–283 (FG), 293–294 (FG), 304–305 (FG), 309–310 (FG), 319–320 (FG), 333–334 (FG), 352–353 (FG), 358–359 (FG), 365–366 (FG), 377–378 (FG), 384–385 (FG), 387–388 (FG), 400–401 (FG), 413–414 (FG), 426–427 (FG), 428–429 (FG), 441–442 (FG), 454–455 (FG), 467–468 (FG), 493–494 (FG), 496–497 (FG), 516–517 (FG), 527–528 (FG), 546–547 (FG), 553–554 (FG), and 565–566 (FG). The tract at residues 2 to 566 (FGGAKPSFGA…GGSLGGGGFG (565 aa)) is 46 X 2 AA repeats of F-G. Disordered regions lie at residues 698–768 (KSVE…WLHP) and 781–860 (TGMD…AANQ). Polar residues predominate over residues 704–718 (NPSSSIGSAPNTPQS). Residues 755-768 (ESQDNGRRESWLHP) are compositionally biased toward basic and acidic residues. Polar residues-rich tracts occupy residues 781–794 (TGMD…STLN) and 806–850 (RPSS…SNRS). The Peptidase S59 domain occupies 886–1028 (RVGYYTIPSL…GSWVFRVKHF (143 aa)). Ser1029 acts as the Nucleophile in catalysis.

Belongs to the nucleoporin GLFG family. As to quaternary structure, part of the nuclear pore complex (NPC). Interacts with Rae1. Nuclear pore complex protein Nup98: Interacts with pzg and Chro. Interacts with MBD-R2; the interaction allows Nup98 recruitment to chromatin. Interacts with Trx. Interacts with Wds. Interacts with Mgtor and Cp190. Upon ecdysone stimulation, interacts with EcR, CTCF, su(Hw) and Trl. In terms of processing, isoform A and isoform C are autoproteolytically cleaved to yield Nup98 and Nup96 or Nup98 only, respectively. As to expression, expressed in brain.

Its subcellular location is the chromosome. It is found in the nucleus. The protein resides in the nucleoplasm. It localises to the nucleus membrane. The protein localises to the nuclear pore complex. Part of the nuclear pore complex (NPC). Required for MAD import as part of the Nup107-160 complex and required for nuclear export of Moe probably via its association with Rae1. Plays a role in nuclear mRNA export. Promotes cell antiviral response by up-regulating FoxK-dependent antiviral gene transcription. In germline stem cells, involved in their maintenance and division together with the TGF-Beta and EGFR signaling pathways. In larval lymph glands, has a role in the maintenance of hematopoiesis by regulating Pvr expression. Functionally, part of the nuclear pore complex (NPC). In the nucleoplasm, binds to transcriptionally active chromatin with a preference for regulatory regions; co-localizes with RNA polymerase II in a RNA-independent manner and before transition into transcription elongation. Plays a role in the transcriptional memory process by stabilizing enhancer-promoter loops and by mediating anchoring of chromatin to the nuclear pore complex region. During larval development, interacts with trx and MBD-R2 and regulates transcription of developmental genes including ecdysone-responsive genes such as Eip74 and E23. In terms of biological role, part of the nuclear pore complex (NPC). The chain is Nuclear pore complex protein Nup98-Nup96 from Drosophila melanogaster (Fruit fly).